The following is a 214-amino-acid chain: Octanoyltransferase (214 aa).

The 179-residue stretch at 36–214 folds into the BPL/LPL catalytic domain; that stretch reads GRESEMVWLL…QQKFDTIFLQ (179 aa). Substrate-binding positions include 75-82, 147-149, and 160-162; these read RGGKYSYH, AFG, and GFS. The active-site Acyl-thioester intermediate is the Cys-178.

This sequence belongs to the LipB family.

Its subcellular location is the cytoplasm. It carries out the reaction octanoyl-[ACP] + L-lysyl-[protein] = N(6)-octanoyl-L-lysyl-[protein] + holo-[ACP] + H(+). The protein operates within protein modification; protein lipoylation via endogenous pathway; protein N(6)-(lipoyl)lysine from octanoyl-[acyl-carrier-protein]: step 1/2. Catalyzes the transfer of endogenously produced octanoic acid from octanoyl-acyl-carrier-protein onto the lipoyl domains of lipoate-dependent enzymes. Lipoyl-ACP can also act as a substrate although octanoyl-ACP is likely to be the physiological substrate. In Anaplasma marginale (strain Florida), this protein is Octanoyltransferase.